A 74-amino-acid chain; its full sequence is Peptide ToAP4 (74 aa).

A signal peptide spans Met-1–Ala-22. Residue Lys-39 is modified to Lysine amide. Positions Gly-40–Phe-74 are excised as a propeptide.

Belongs to the non-disulfide-bridged peptide (NDBP) superfamily. Short antimicrobial peptide (group 4) family. In terms of tissue distribution, expressed by the venom gland.

The protein localises to the secreted. In terms of biological role, shows anti-inflammatory activities, since it decreases release of pro-inflammatory cytokines, and increases release of anti-inflammatory cytokines. Acts by blocking the Toll-like receptor 4 (TLR4). Also increases MHC-II expression in LPS-stimulated cells. Does not show antibacterial activity on Mycobacterium abscessus subsp. massiliense. Does not show antifungal activity. Has low hemolytic activity on human erythrocyte and low monocyte cytotoxicity. In vivo, does not induce immune cell migration. Helical wheel projections predict an amphipathic peptide with distinct hydrophobic and hydrophilic faces. This chain is Peptide ToAP4, found in Tityus obscurus (Amazonian scorpion).